The primary structure comprises 353 residues: S-adenosylmethionine:tRNA ribosyltransferase-isomerase (353 aa).

Belongs to the QueA family. In terms of assembly, monomer.

It is found in the cytoplasm. It carries out the reaction 7-aminomethyl-7-carbaguanosine(34) in tRNA + S-adenosyl-L-methionine = epoxyqueuosine(34) in tRNA + adenine + L-methionine + 2 H(+). Its pathway is tRNA modification; tRNA-queuosine biosynthesis. Transfers and isomerizes the ribose moiety from AdoMet to the 7-aminomethyl group of 7-deazaguanine (preQ1-tRNA) to give epoxyqueuosine (oQ-tRNA). The sequence is that of S-adenosylmethionine:tRNA ribosyltransferase-isomerase from Marinomonas sp. (strain MWYL1).